Consider the following 409-residue polypeptide: Immediate early response gene 5-like protein (409 aa).

Disordered stretches follow at residues 168–237 (QPPH…PSSS) and 312–335 (GQEE…GGTP). Residues 184–195 (QPGPAPLPPPAP) show a composition bias toward pro residues. Composition is skewed to low complexity over residues 196-212 (AALC…CSAP) and 220-237 (PPTV…PSSS). Over residues 313–324 (QEEEDDEEEDAG) the composition is skewed to acidic residues.

The protein belongs to the IER family.

The chain is Immediate early response gene 5-like protein (Ier5l) from Rattus norvegicus (Rat).